The chain runs to 289 residues: ATP synthase gamma chain (289 aa).

Belongs to the ATPase gamma chain family. F-type ATPases have 2 components, CF(1) - the catalytic core - and CF(0) - the membrane proton channel. CF(1) has five subunits: alpha(3), beta(3), gamma(1), delta(1), epsilon(1). CF(0) has three main subunits: a, b and c.

The protein localises to the cell inner membrane. Its function is as follows. Produces ATP from ADP in the presence of a proton gradient across the membrane. The gamma chain is believed to be important in regulating ATPase activity and the flow of protons through the CF(0) complex. The protein is ATP synthase gamma chain of Polynucleobacter necessarius subsp. necessarius (strain STIR1).